The chain runs to 288 residues: 4-diphosphocytidyl-2-C-methyl-D-erythritol kinase (288 aa).

Lys8 is a catalytic residue. ATP is bound at residue 90-100; it reads PFGAGLGGGSS. Asp132 is an active-site residue.

The protein belongs to the GHMP kinase family. IspE subfamily.

It carries out the reaction 4-CDP-2-C-methyl-D-erythritol + ATP = 4-CDP-2-C-methyl-D-erythritol 2-phosphate + ADP + H(+). The protein operates within isoprenoid biosynthesis; isopentenyl diphosphate biosynthesis via DXP pathway; isopentenyl diphosphate from 1-deoxy-D-xylulose 5-phosphate: step 3/6. In terms of biological role, catalyzes the phosphorylation of the position 2 hydroxy group of 4-diphosphocytidyl-2C-methyl-D-erythritol. The sequence is that of 4-diphosphocytidyl-2-C-methyl-D-erythritol kinase from Chlorobium chlorochromatii (strain CaD3).